We begin with the raw amino-acid sequence, 624 residues long: Polycystin-2-like protein 2 (624 aa).

Topologically, residues 1-31 are cytoplasmic; sequence MAEASRWHRGGASKHKLHYRKEVEITTTLQE. Residues 32–52 form a helical membrane-spanning segment; the sequence is LLLYFIFLINLCILTFGMVNP. Topologically, residues 53–276 are extracellular; it reads HMYYLNKVMS…YSVKLLRYVS (224 aa). N-linked (GlcNAc...) asparagine glycans are attached at residues Asn115 and Asn138. The helical transmembrane segment at 277-297 threads the bilayer; the sequence is YYDYFIASCEITFCIFLFVFT. Topologically, residues 298–314 are cytoplasmic; that stretch reads TQEVKKIKEFKSAYFKS. Residues 315–335 form a helical membrane-spanning segment; it reads IWNWLELLLLLLCFVAVSFNT. Over 336 to 360 the chain is Extracellular; that stretch reads YYNVQIFLLLGQLLKSTEKYSDFYF. The helical transmembrane segment at 361–381 threads the bilayer; it reads LACWHIYYNNIIAITIFFAWI. At 382 to 406 the chain is on the cytoplasmic side; sequence KIFKFISFNKTMSQLSSTLSRCVKD. A helical membrane pass occupies residues 407–427; the sequence is IVGFAIMFFIIFFAYAQLGFL. The Extracellular segment spans residues 428–469; sequence VFGSQVDDFSTFQNSIFAQFRIVLGDFNFAGIQQANPILGPI. The chain crosses the membrane as a helical span at residues 470-490; it reads YFITFIFFVFFVLLNMFLAII. The Cytoplasmic portion of the chain corresponds to 491–624; that stretch reads NDTYSEVKAD…NQVVRKVSAL (134 aa). Residues 556–576 adopt a coiled-coil conformation; sequence ENEIQNAEQMKKWKERLEKKY.

This sequence belongs to the polycystin family. As to quaternary structure, interacts with TRPC1 and TRPC5. As to expression, expressed only in testis. Expressed also in brain and kidney. Expressed only in transformed lymphoblasts.

The protein localises to the membrane. Its function is as follows. Exhibits a lower single conductance but no spontaneous channel activity. May function as a regulator of calcium channels or a channel component involving Ca2(+) homeostasis. In Homo sapiens (Human), this protein is Polycystin-2-like protein 2.